A 206-amino-acid chain; its full sequence is LexA repressor (206 aa).

Positions 28 to 48 form a DNA-binding region, H-T-H motif; it reads RAEIASELGFKSANAAEEHLK. Residues S122 and K160 each act as for autocatalytic cleavage activity in the active site.

This sequence belongs to the peptidase S24 family. As to quaternary structure, homodimer.

It carries out the reaction Hydrolysis of Ala-|-Gly bond in repressor LexA.. In terms of biological role, represses a number of genes involved in the response to DNA damage (SOS response), including recA and lexA. In the presence of single-stranded DNA, RecA interacts with LexA causing an autocatalytic cleavage which disrupts the DNA-binding part of LexA, leading to derepression of the SOS regulon and eventually DNA repair. The protein is LexA repressor of Tolumonas auensis (strain DSM 9187 / NBRC 110442 / TA 4).